Reading from the N-terminus, the 285-residue chain is Ribosomal RNA small subunit methyltransferase A (285 aa).

Residues Asn11, Leu13, Gly37, Glu57, Asp85, and Asn105 each coordinate S-adenosyl-L-methionine.

The protein belongs to the class I-like SAM-binding methyltransferase superfamily. rRNA adenine N(6)-methyltransferase family. RsmA subfamily.

The protein resides in the cytoplasm. It carries out the reaction adenosine(1518)/adenosine(1519) in 16S rRNA + 4 S-adenosyl-L-methionine = N(6)-dimethyladenosine(1518)/N(6)-dimethyladenosine(1519) in 16S rRNA + 4 S-adenosyl-L-homocysteine + 4 H(+). In terms of biological role, specifically dimethylates two adjacent adenosines (A1518 and A1519) in the loop of a conserved hairpin near the 3'-end of 16S rRNA in the 30S particle. May play a critical role in biogenesis of 30S subunits. This is Ribosomal RNA small subunit methyltransferase A from Campylobacter curvus (strain 525.92).